The following is a 195-amino-acid chain: ATP-dependent Clp protease proteolytic subunit (195 aa).

S102 acts as the Nucleophile in catalysis. H125 is a catalytic residue.

It belongs to the peptidase S14 family. Component of the chloroplastic Clp protease core complex.

It is found in the plastid. The protein localises to the chloroplast stroma. The catalysed reaction is Hydrolysis of proteins to small peptides in the presence of ATP and magnesium. alpha-casein is the usual test substrate. In the absence of ATP, only oligopeptides shorter than five residues are hydrolyzed (such as succinyl-Leu-Tyr-|-NHMec, and Leu-Tyr-Leu-|-Tyr-Trp, in which cleavage of the -Tyr-|-Leu- and -Tyr-|-Trp bonds also occurs).. In terms of biological role, cleaves peptides in various proteins in a process that requires ATP hydrolysis. Has a chymotrypsin-like activity. Plays a major role in the degradation of misfolded proteins. The protein is ATP-dependent Clp protease proteolytic subunit of Phaseolus vulgaris (Kidney bean).